Here is a 291-residue protein sequence, read N- to C-terminus: Ribosomal RNA small subunit methyltransferase I (291 aa).

Belongs to the methyltransferase superfamily. RsmI family.

It localises to the cytoplasm. It catalyses the reaction cytidine(1402) in 16S rRNA + S-adenosyl-L-methionine = 2'-O-methylcytidine(1402) in 16S rRNA + S-adenosyl-L-homocysteine + H(+). Catalyzes the 2'-O-methylation of the ribose of cytidine 1402 (C1402) in 16S rRNA. The protein is Ribosomal RNA small subunit methyltransferase I of Neisseria meningitidis serogroup A / serotype 4A (strain DSM 15465 / Z2491).